Here is a 929-residue protein sequence, read N- to C-terminus: MGGSCAQRRRAGPRQVLFPLLLPLFYPTLCEPIRYSIPEELAKGSVVGNLAKDLGLSVLDVSARELRVSAEKLHFSVDAQSGDLLVKDRIDREQICKERRRCELQLEAVVENPLNIFHIIVVIEDVNDHAPQFQKDEINLEISESVSLGMGTILESAEDPDISMNSLSKYQLSPNEYFSLVEKDNPDGGKYPELVLQKTLDRETQSAHHLVLTALDGGDPPRSGTAQIRILVIDANDNPPVFSQDVYRVSLREDVPPGTSILRVKATDQDEGINSEITYSFFGVADKAQHVFSLDYTTGNILTQQPLDFEEVERYTMNIEAKDRGSLSTRCKVIVEVVDENDNSPEIIITSLSDQIMEDSPPGVVVALFKTRDRDSGENGEVRCSLSRGVPFKIHSSSNNYYKLVTDEALDREQTPEYNVTIAATDRGKPPLSSSKTITLHITDVNDNAPVFGQSAYLVHVPENNQPGASIAQVSASDPDFGPNGRVSYSLIASDLESRTLSSYVSVSAQSGVVFAQRAFDHEQLRTFELTLQARDQGSPALSANVSLRVLVGDRNDNAPRVLYPALGPDGSALFDTVPRAAQPGYLVTKVVAVDADSGHNAWLSYHVVQASEPGLFSLGLRTGEVRMVRALGDKDLVRQRLLVAVRDGGQPPLSATATLHLVFADSLQEVLPDFSDHPTPSDSQAEMQFYLVVALALISVLFLLAVILAIALRLRQSFSPTAGDCFESVLCSKSGPVGPPNYSEGTLPYAYNFCVPGDQMNPEFNFFASVDHCPATQDNLNKDSMLLASILTPSVEADKKILKQQAPPNTDWRFSQAQRPGTSGSQNGDDTGTWPNNQFDTEMLQAMILASASEAADGSSTLGGGAGTMGLSARYGPQFTLQHVPDYRQNVYIPGSNATLTNAAGKRDGKAPAGGNGNKKKSGKKEKK.

Positions 1–30 are cleaved as a signal peptide; the sequence is MGGSCAQRRRAGPRQVLFPLLLPLFYPTLC. Cadherin domains are found at residues 31–133, 134–242, 243–347, 348–452, 453–562, and 570–675; these read EPIR…APQF, QKDE…PPVF, SQDV…SPEI, IITS…APVF, GQSA…APRV, and DGSA…LPDF. At 31–691 the chain is on the extracellular side; sequence EPIRYSIPEE…SDSQAEMQFY (661 aa). N-linked (GlcNAc...) asparagine glycosylation is found at asparagine 419 and asparagine 545. A helical membrane pass occupies residues 692–712; sequence LVVALALISVLFLLAVILAIA. At 713-929 the chain is on the cytoplasmic side; sequence LRLRQSFSPT…KKKSGKKEKK (217 aa). Disordered stretches follow at residues 806–838 and 899–929; these read QAPPNTDWRFSQAQRPGTSGSQNGDDTGTWPNN and ATLTNAAGKRDGKAPAGGNGNKKKSGKKEKK. Polar residues predominate over residues 807–838; the sequence is APPNTDWRFSQAQRPGTSGSQNGDDTGTWPNN. Residues 919–929 show a composition bias toward basic residues; the sequence is NKKKSGKKEKK.

The protein localises to the cell membrane. Functionally, potential calcium-dependent cell-adhesion protein. May be involved in the establishment and maintenance of specific neuronal connections in the brain. The sequence is that of Protocadherin gamma-B7 (PCDHGB7) from Pan troglodytes (Chimpanzee).